Consider the following 476-residue polypeptide: Sulfate adenylyltransferase subunit 1 (476 aa).

One can recognise a tr-type G domain in the interval 17–232 (KDLLRLLTAG…LETVHIDSDN (216 aa)). Residues 26 to 33 (GSVDDGKS) are G1. 26–33 (GSVDDGKS) contributes to the GTP binding site. The interval 84 to 88 (GITID) is G2. Residues 105–108 (DTPG) are G3. GTP is bound by residues 105 to 109 (DTPGH) and 160 to 163 (NKMD). Residues 160 to 163 (NKMD) form a G4 region. The segment at 197 to 199 (SAL) is G5.

The protein belongs to the TRAFAC class translation factor GTPase superfamily. Classic translation factor GTPase family. CysN/NodQ subfamily. Heterodimer composed of CysD, the smaller subunit, and CysN.

It catalyses the reaction sulfate + ATP + H(+) = adenosine 5'-phosphosulfate + diphosphate. It functions in the pathway sulfur metabolism; hydrogen sulfide biosynthesis; sulfite from sulfate: step 1/3. With CysD forms the ATP sulfurylase (ATPS) that catalyzes the adenylation of sulfate producing adenosine 5'-phosphosulfate (APS) and diphosphate, the first enzymatic step in sulfur assimilation pathway. APS synthesis involves the formation of a high-energy phosphoric-sulfuric acid anhydride bond driven by GTP hydrolysis by CysN coupled to ATP hydrolysis by CysD. The sequence is that of Sulfate adenylyltransferase subunit 1 from Bacteroides fragilis (strain YCH46).